A 786-amino-acid chain; its full sequence is LPS-assembly protein LptD (786 aa).

Positions 1 to 39 are cleaved as a signal peptide; it reads MPPKPLFPNVFPGDGAPRKRRLALALLAVPGLVPAVSYA.

The protein belongs to the LptD family. As to quaternary structure, component of the lipopolysaccharide transport and assembly complex. Interacts with LptE and LptA.

Its subcellular location is the cell outer membrane. Functionally, together with LptE, is involved in the assembly of lipopolysaccharide (LPS) at the surface of the outer membrane. The polypeptide is LPS-assembly protein LptD (Burkholderia ambifaria (strain ATCC BAA-244 / DSM 16087 / CCUG 44356 / LMG 19182 / AMMD) (Burkholderia cepacia (strain AMMD))).